The chain runs to 92 residues: Alpha-elapitoxin-As2a (92 aa).

The first 21 residues, 1–21 (MKTLLLTLVVVTIVCLDLGDG), serve as a signal peptide directing secretion. 5 cysteine pairs are disulfide-bonded: Cys-24–Cys-41, Cys-34–Cys-62, Cys-47–Cys-51, Cys-66–Cys-77, and Cys-78–Cys-83.

The protein belongs to the three-finger toxin family. Long-chain subfamily. Type II alpha-neurotoxin sub-subfamily. Expressed by the venom gland.

Its subcellular location is the secreted. Its function is as follows. Binds with high affinity to muscular (alpha-1/CHRNA1) and neuronal (alpha-7/CHRNA7) nicotinic acetylcholine receptor (nAChR) and inhibits acetylcholine from binding to the receptor, thereby impairing neuromuscular and neuronal transmission. In Austrelaps superbus (Lowland copperhead snake), this protein is Alpha-elapitoxin-As2a.